The sequence spans 385 residues: Acetylornithine aminotransferase (385 aa).

Residues 94–95 and Phe-126 contribute to the pyridoxal 5'-phosphate site; that span reads GT. Residue Arg-129 participates in N(2)-acetyl-L-ornithine binding. 211 to 214 lines the pyridoxal 5'-phosphate pocket; the sequence is DEVQ. Lys-240 bears the N6-(pyridoxal phosphate)lysine mark. A N(2)-acetyl-L-ornithine-binding site is contributed by Thr-267. Thr-268 is a pyridoxal 5'-phosphate binding site.

Belongs to the class-III pyridoxal-phosphate-dependent aminotransferase family. ArgD subfamily. Homodimer. Requires pyridoxal 5'-phosphate as cofactor.

Its subcellular location is the cytoplasm. It carries out the reaction N(2)-acetyl-L-ornithine + 2-oxoglutarate = N-acetyl-L-glutamate 5-semialdehyde + L-glutamate. The protein operates within amino-acid biosynthesis; L-arginine biosynthesis; N(2)-acetyl-L-ornithine from L-glutamate: step 4/4. This chain is Acetylornithine aminotransferase, found in Thermotoga maritima (strain ATCC 43589 / DSM 3109 / JCM 10099 / NBRC 100826 / MSB8).